A 492-amino-acid chain; its full sequence is Transcription factor IIIB 60 kDa subunit (492 aa).

A TFIIB-type zinc finger spans residues 1–30; that stretch reads MGCPNCGSTTFESDTASGNTYCTQCGVVVE. Residues cysteine 3, cysteine 6, cysteine 22, and cysteine 25 each coordinate Zn(2+). Positions 440–468 are disordered; that stretch reads QPRKRRRYRPRDSTSDGIADTAAESAKEM.

It belongs to the TFIIB family. In terms of assembly, TFIIIB comprises the TATA-binding protein (TBP), the B-related factor (BRF) and a third subunit (Potential). Interacts with maf1.

It localises to the nucleus. Its function is as follows. General activator of RNA polymerase III transcription. The protein is Transcription factor IIIB 60 kDa subunit (brf1) of Schizosaccharomyces pombe (strain 972 / ATCC 24843) (Fission yeast).